Reading from the N-terminus, the 666-residue chain is 7SK snRNA methylphosphate capping enzyme (666 aa).

An N-acetylmethionine modification is found at methionine 1. Residues 1–10 (MIEMAAEKEP) show a composition bias toward basic and acidic residues. The disordered stretch occupies residues 1-141 (MIEMAAEKEP…GSGGSFKHPA (141 aa)). The span at 50–61 (GPGPRAHSAGAA) shows a compositional bias: low complexity. Serine 57 carries the phosphoserine modification. Arginine 91 carries the post-translational modification Omega-N-methylarginine. 3 positions are modified to phosphoserine: serine 126, serine 150, and serine 154. A Phosphothreonine modification is found at threonine 188. Phosphoserine occurs at positions 191, 192, and 229. The span at 235-244 (RKRHRHRGPH) shows a compositional bias: basic residues. The interval 235 to 291 (RKRHRHRGPHHQQQQQASGGNDSNAAVLPTDPLTPSLHGEGATQQQQNRGQNRDAPQ) is disordered. A compositionally biased stretch (low complexity) spans 245–254 (HQQQQQASGG). Threonine 268 bears the Phosphothreonine mark. Residues serine 307 and serine 321 each carry the phosphoserine modification. Low complexity predominate over residues 309-337 (LPSALQGSSGSLSAPPAASVTSAPSTSSS). The tract at residues 309–383 (LPSALQGSSG…HHHPLPATGF (75 aa)) is disordered. Basic residues predominate over residues 338-347 (SRHRKRRRTS). Serine 368 carries the post-translational modification Phosphoserine. S-adenosyl-L-methionine contacts are provided by residues tyrosine 399, arginine 410, 428-430 (GCN), 451-452 (DI), 536-537 (NY), and phenylalanine 558. Positions 408–663 (DVRLRVLKPE…PVYLFHKARS (256 aa)) constitute a Bin3-type SAM domain. Lysine 620 participates in a covalent cross-link: Glycyl lysine isopeptide (Lys-Gly) (interchain with G-Cter in SUMO2).

The protein belongs to the methyltransferase superfamily. In terms of assembly, core component of the 7SK RNP complex, at least composed of 7SK RNA, LARP7, MEPCE, HEXIM1 (or HEXIM2) and P-TEFb (composed of CDK9 and CCNT1/cyclin-T1). Interacts with METTL16. Interacts with RBM7; upon genotoxic stress this interaction is enhanced, triggering the release of inactive P-TEFb complex from the core, yielding to P-TEFb complex activation. Post-translationally, dephosphorylated at Ser-126 by the PNUTS-PP1 complex, promoting RNA polymerase II transcription pause-release.

The protein resides in the nucleus. It carries out the reaction a 5'-end triphospho-guanosine-ribonucleotide-snRNA + S-adenosyl-L-methionine = a 5'-end methyltriphosphate-guanosine-ribonucleotide-snRNA + S-adenosyl-L-homocysteine. Its function is as follows. S-adenosyl-L-methionine-dependent methyltransferase that adds a methylphosphate cap at the 5'-end of 7SK snRNA (7SK RNA), leading to stabilize it. Also has a non-enzymatic function as part of the 7SK RNP complex: the 7SK RNP complex sequesters the positive transcription elongation factor b (P-TEFb) in a large inactive 7SK RNP complex preventing RNA polymerase II phosphorylation and subsequent transcriptional elongation. The 7SK RNP complex also promotes snRNA gene transcription by RNA polymerase II via interaction with the little elongation complex (LEC). In the 7SK RNP complex, MEPCE is required to stabilize 7SK RNA and facilitate the assembly of 7SK RNP complex. MEPCE has a non-enzymatic function in the 7SK RNP complex; it has a non-enzymatic function; interaction with LARP7 within the 7SK RNP complex occluding its catalytic center. Also required for stability of U6 snRNAs. This is 7SK snRNA methylphosphate capping enzyme from Mus musculus (Mouse).